A 367-amino-acid chain; its full sequence is Sigma54-dependent transcriptional regulator SfnR (367 aa).

In terms of domain architecture, Sigma-54 factor interaction spans 21–250; the sequence is QVFEDPKSQA…LENVIHHTLL (230 aa). ATP is bound by residues 49-56 and 112-121; these read GETGTGKE and ADGGTLFLDE.

Involved in the dimethyl sulfide degradation pathway. Activates the expression of sfnG and sfnF. The polypeptide is Sigma54-dependent transcriptional regulator SfnR (Pseudomonas fluorescens (strain Pf0-1)).